The chain runs to 258 residues: Imidazole glycerol phosphate synthase subunit HisF (258 aa).

Catalysis depends on residues aspartate 11 and aspartate 130.

Belongs to the HisA/HisF family. As to quaternary structure, heterodimer of HisH and HisF.

The protein localises to the cytoplasm. The enzyme catalyses 5-[(5-phospho-1-deoxy-D-ribulos-1-ylimino)methylamino]-1-(5-phospho-beta-D-ribosyl)imidazole-4-carboxamide + L-glutamine = D-erythro-1-(imidazol-4-yl)glycerol 3-phosphate + 5-amino-1-(5-phospho-beta-D-ribosyl)imidazole-4-carboxamide + L-glutamate + H(+). The protein operates within amino-acid biosynthesis; L-histidine biosynthesis; L-histidine from 5-phospho-alpha-D-ribose 1-diphosphate: step 5/9. Functionally, IGPS catalyzes the conversion of PRFAR and glutamine to IGP, AICAR and glutamate. The HisF subunit catalyzes the cyclization activity that produces IGP and AICAR from PRFAR using the ammonia provided by the HisH subunit. The protein is Imidazole glycerol phosphate synthase subunit HisF of Cronobacter sakazakii (strain ATCC BAA-894) (Enterobacter sakazakii).